The sequence spans 164 residues: Xanthine-guanine phosphoribosyltransferase (164 aa).

Residues 41-42 (RG) and 98-106 (DDLTDTGKT) contribute to the 5-phospho-alpha-D-ribose 1-diphosphate site. Asp99 is a binding site for Mg(2+). Residues Asp102 and Ile145 each coordinate guanine. Xanthine is bound by residues Asp102 and Ile145. GMP is bound by residues 102 to 106 (DTGKT) and 144 to 145 (WI).

Belongs to the purine/pyrimidine phosphoribosyltransferase family. XGPT subfamily. Homotetramer. It depends on Mg(2+) as a cofactor.

It localises to the cell inner membrane. The enzyme catalyses GMP + diphosphate = guanine + 5-phospho-alpha-D-ribose 1-diphosphate. It carries out the reaction XMP + diphosphate = xanthine + 5-phospho-alpha-D-ribose 1-diphosphate. The catalysed reaction is IMP + diphosphate = hypoxanthine + 5-phospho-alpha-D-ribose 1-diphosphate. The protein operates within purine metabolism; GMP biosynthesis via salvage pathway; GMP from guanine: step 1/1. It functions in the pathway purine metabolism; XMP biosynthesis via salvage pathway; XMP from xanthine: step 1/1. Functionally, purine salvage pathway enzyme that catalyzes the transfer of the ribosyl-5-phosphate group from 5-phospho-alpha-D-ribose 1-diphosphate (PRPP) to the N9 position of the 6-oxopurines guanine and xanthine to form the corresponding ribonucleotides GMP (guanosine 5'-monophosphate) and XMP (xanthosine 5'-monophosphate), with the release of PPi. To a lesser extent, also acts on hypoxanthine. The protein is Xanthine-guanine phosphoribosyltransferase of Rhizobium johnstonii (strain DSM 114642 / LMG 32736 / 3841) (Rhizobium leguminosarum bv. viciae).